The following is a 239-amino-acid chain: Ribonuclease PH (239 aa).

Residues Arg86 and 124–126 (GTR) each bind phosphate.

Belongs to the RNase PH family. As to quaternary structure, homohexameric ring arranged as a trimer of dimers.

It catalyses the reaction tRNA(n+1) + phosphate = tRNA(n) + a ribonucleoside 5'-diphosphate. Phosphorolytic 3'-5' exoribonuclease that plays an important role in tRNA 3'-end maturation. Removes nucleotide residues following the 3'-CCA terminus of tRNAs; can also add nucleotides to the ends of RNA molecules by using nucleoside diphosphates as substrates, but this may not be physiologically important. Probably plays a role in initiation of 16S rRNA degradation (leading to ribosome degradation) during starvation. The chain is Ribonuclease PH from Rickettsia bellii (strain OSU 85-389).